Reading from the N-terminus, the 789-residue chain is Disintegrin and metalloproteinase domain-containing protein 7 (789 aa).

The signal sequence occupies residues 1-23; sequence MLTTGIFWMTVLISHIQERGIVG. The propeptide occupies 24–176; the sequence is VEGQELVHPK…NHSCVGLNFT (153 aa). The Extracellular portion of the chain corresponds to 24–667; sequence VEGQELVHPK…EWGEALNLTS (644 aa). N-linked (GlcNAc...) asparagine glycans are attached at residues N84, N167, and N174. The Peptidase M12B domain occupies 199 to 393; that stretch reads KFIELFVVAD…QKPACILNNP (195 aa). 4 disulfides stabilise this stretch: C310–C388, C350–C372, C352–C357, and C459–C479. Residues 401-487 enclose the Disintegrin domain; it reads YPFCGNKKVD…ECPKDEFQAN (87 aa). N-linked (GlcNAc...) asparagine glycosylation is found at N583, N628, and N664. The helical transmembrane segment at 668–689 threads the bilayer; it reads VSIMVIVLVMVIIGVGLVILLI. Over 690–789 the chain is Cytoplasmic; sequence RYQKCIKMKQ…DTQSGCERLG (100 aa). The interval 764–789 is disordered; sequence RGIADPKQTDNVNLNLDTQSGCERLG. The span at 772 to 789 shows a compositional bias: polar residues; sequence TDNVNLNLDTQSGCERLG.

Interacts with ITM2B in sperm; the interaction increases following capacitation. Interacts with HSPA5 and CANX. Expressed in both the head and tails of sperm (at protein level). Expressed in the epididymis (at protein level). Abundantly expressed in the apical region of the proximal caput epididymal epithelium, with decreasing expression in the mid and distal caput epididymal epithelium.

Its subcellular location is the membrane. Its function is as follows. Required for normal male fertility via maintenance of epithelial cell morphology in the caput epididymis and subsequently correct epididymis lumen structure required for sperm development. Plays a role in sperm motility, flagella morphology and tyrosine phosphorylation during sperm capacitance. Plays a role in normal expression levels of HSPA5, ITM2B and ADAM2 in sperm both prior to and post-capacitation. This is a non catalytic metalloprotease-like protein. The chain is Disintegrin and metalloproteinase domain-containing protein 7 from Mus musculus (Mouse).